A 219-amino-acid polypeptide reads, in one-letter code: Charged multivesicular body protein 5 (219 aa).

The span at 1–10 (MNRFFGKAKP) shows a compositional bias: basic residues. Positions 1 to 21 (MNRFFGKAKPKAPPPSLTDCI) are disordered. Residues 26–179 (SRAESIDKKI…LGDELLADED (154 aa)) adopt a coiled-coil conformation. Ser86 carries the post-translational modification Phosphoserine. Residues 188 to 219 (SAPAIPEGVPTDTKNKDGVLVDEFGLPQIPAS) are disordered.

It belongs to the SNF7 family. As to quaternary structure, probable peripherally associated component of the endosomal sorting required for transport complex III (ESCRT-III). ESCRT-III components are thought to multimerize to form a flat lattice on the perimeter membrane of the endosome. Several assembly forms of ESCRT-III may exist that interact and act sequentially. Interacts with VTA1. Interacts with CHMP2A. Interacts with VTA1; the interaction involves soluble CHMP5. Interacts with NOD2. Interacts with BROX. In terms of processing, ISGylated. Isgylation inhibits its interaction with VTA1.

It is found in the cytoplasm. The protein localises to the cytosol. The protein resides in the endosome membrane. Its subcellular location is the midbody. Functionally, probable peripherally associated component of the endosomal sorting required for transport complex III (ESCRT-III) which is involved in multivesicular bodies (MVBs) formation and sorting of endosomal cargo proteins into MVBs. MVBs contain intraluminal vesicles (ILVs) that are generated by invagination and scission from the limiting membrane of the endosome and mostly are delivered to lysosomes enabling degradation of membrane proteins, such as stimulated growth factor receptors, lysosomal enzymes and lipids. The MVB pathway appears to require the sequential function of ESCRT-O, -I,-II and -III complexes. ESCRT-III proteins mostly dissociate from the invaginating membrane before the ILV is released. The ESCRT machinery also functions in topologically equivalent membrane fission events, such as the terminal stages of cytokinesis. ESCRT-III proteins are believed to mediate the necessary vesicle extrusion and/or membrane fission activities, possibly in conjunction with the AAA ATPase VPS4. In Mus musculus (Mouse), this protein is Charged multivesicular body protein 5 (Chmp5).